Consider the following 332-residue polypeptide: 4-hydroxythreonine-4-phosphate dehydrogenase (332 aa).

Residues His-138 and Thr-139 each coordinate substrate. A divalent metal cation is bound by residues His-168, His-213, and His-269. Substrate is bound by residues Lys-277, Asn-286, and Arg-295.

The protein belongs to the PdxA family. In terms of assembly, homodimer. Zn(2+) is required as a cofactor. Mg(2+) serves as cofactor. It depends on Co(2+) as a cofactor.

The protein localises to the cytoplasm. The catalysed reaction is 4-(phosphooxy)-L-threonine + NAD(+) = 3-amino-2-oxopropyl phosphate + CO2 + NADH. The protein operates within cofactor biosynthesis; pyridoxine 5'-phosphate biosynthesis; pyridoxine 5'-phosphate from D-erythrose 4-phosphate: step 4/5. Catalyzes the NAD(P)-dependent oxidation of 4-(phosphooxy)-L-threonine (HTP) into 2-amino-3-oxo-4-(phosphooxy)butyric acid which spontaneously decarboxylates to form 3-amino-2-oxopropyl phosphate (AHAP). The sequence is that of 4-hydroxythreonine-4-phosphate dehydrogenase from Vibrio parahaemolyticus serotype O3:K6 (strain RIMD 2210633).